The sequence spans 467 residues: UDP-N-acetylmuramate--L-alanine ligase (467 aa).

114-120 (GTHGKTT) contacts ATP.

Belongs to the MurCDEF family.

The protein resides in the cytoplasm. The catalysed reaction is UDP-N-acetyl-alpha-D-muramate + L-alanine + ATP = UDP-N-acetyl-alpha-D-muramoyl-L-alanine + ADP + phosphate + H(+). Its pathway is cell wall biogenesis; peptidoglycan biosynthesis. Its function is as follows. Cell wall formation. The protein is UDP-N-acetylmuramate--L-alanine ligase of Bradyrhizobium diazoefficiens (strain JCM 10833 / BCRC 13528 / IAM 13628 / NBRC 14792 / USDA 110).